The primary structure comprises 494 residues: V-type proton ATPase subunit B (494 aa).

An ATP-binding site is contributed by arginine 384.

The protein belongs to the ATPase alpha/beta chains family. As to quaternary structure, V-ATPase is a heteromultimeric enzyme made up of two complexes: the ATP-hydrolytic V1 complex and the proton translocation V0 complex. The V1 complex consists of three catalytic AB heterodimers that form a heterohexamer, three peripheral stalks each consisting of EG heterodimers, one central rotor including subunits D and F, and the regulatory subunits C and H. The proton translocation complex V0 consists of the proton transport subunit a, a ring of proteolipid subunits c9c'', rotary subunit d, subunits e and f, and the accessory subunits VhaAC45 and ATP6AP2.

Functionally, non-catalytic subunit of the V1 complex of vacuolar(H+)-ATPase (V-ATPase), a multisubunit enzyme composed of a peripheral complex (V1) that hydrolyzes ATP and a membrane integral complex (V0) that translocates protons. V-ATPase is responsible for acidifying and maintaining the pH of intracellular compartments and in some cell types, is targeted to the plasma membrane, where it is responsible for acidifying the extracellular environment. Essential for the proper assembly and activity of V-ATPase. This Manduca sexta (Tobacco hawkmoth) protein is V-type proton ATPase subunit B (VHA55).